The chain runs to 173 residues: 3-hydroxydecanoyl-[acyl-carrier-protein] dehydratase (173 aa).

The active site involves His71.

This sequence belongs to the thioester dehydratase family. FabA subfamily. In terms of assembly, homodimer.

The protein resides in the cytoplasm. It catalyses the reaction a (3R)-hydroxyacyl-[ACP] = a (2E)-enoyl-[ACP] + H2O. The enzyme catalyses (3R)-hydroxydecanoyl-[ACP] = (2E)-decenoyl-[ACP] + H2O. The catalysed reaction is (2E)-decenoyl-[ACP] = (3Z)-decenoyl-[ACP]. It participates in lipid metabolism; fatty acid biosynthesis. In terms of biological role, necessary for the introduction of cis unsaturation into fatty acids. Catalyzes the dehydration of (3R)-3-hydroxydecanoyl-ACP to E-(2)-decenoyl-ACP and then its isomerization to Z-(3)-decenoyl-ACP. Can catalyze the dehydratase reaction for beta-hydroxyacyl-ACPs with saturated chain lengths up to 16:0, being most active on intermediate chain length. The sequence is that of 3-hydroxydecanoyl-[acyl-carrier-protein] dehydratase from Bradyrhizobium sp. (strain BTAi1 / ATCC BAA-1182).